Here is a 383-residue protein sequence, read N- to C-terminus: Succinyl-diaminopimelate desuccinylase (383 aa).

Histidine 72 lines the Zn(2+) pocket. The active site involves aspartate 74. Position 105 (aspartate 105) interacts with Zn(2+). Glutamate 139 serves as the catalytic Proton acceptor. The Zn(2+) site is built by glutamate 140, glutamate 168, and histidine 356.

This sequence belongs to the peptidase M20A family. DapE subfamily. Homodimer. Zn(2+) serves as cofactor. The cofactor is Co(2+).

The catalysed reaction is N-succinyl-(2S,6S)-2,6-diaminopimelate + H2O = (2S,6S)-2,6-diaminopimelate + succinate. It functions in the pathway amino-acid biosynthesis; L-lysine biosynthesis via DAP pathway; LL-2,6-diaminopimelate from (S)-tetrahydrodipicolinate (succinylase route): step 3/3. In terms of biological role, catalyzes the hydrolysis of N-succinyl-L,L-diaminopimelic acid (SDAP), forming succinate and LL-2,6-diaminopimelate (DAP), an intermediate involved in the bacterial biosynthesis of lysine and meso-diaminopimelic acid, an essential component of bacterial cell walls. This is Succinyl-diaminopimelate desuccinylase from Beijerinckia indica subsp. indica (strain ATCC 9039 / DSM 1715 / NCIMB 8712).